Reading from the N-terminus, the 219-residue chain is Glycerol-3-phosphate acyltransferase 2 (219 aa).

5 helical membrane-spanning segments follow: residues Met1–Pro21, Trp55–Ala75, Ala93–Leu113, Val135–Leu155, and Ile160–Glu180.

The protein belongs to the PlsY family. In terms of assembly, probably interacts with PlsX.

Its subcellular location is the cell inner membrane. It catalyses the reaction an acyl phosphate + sn-glycerol 3-phosphate = a 1-acyl-sn-glycero-3-phosphate + phosphate. It functions in the pathway lipid metabolism; phospholipid metabolism. Its function is as follows. Catalyzes the transfer of an acyl group from acyl-phosphate (acyl-PO(4)) to glycerol-3-phosphate (G3P) to form lysophosphatidic acid (LPA). This enzyme utilizes acyl-phosphate as fatty acyl donor, but not acyl-CoA or acyl-ACP. In Rhizobium johnstonii (strain DSM 114642 / LMG 32736 / 3841) (Rhizobium leguminosarum bv. viciae), this protein is Glycerol-3-phosphate acyltransferase 2.